We begin with the raw amino-acid sequence, 402 residues long: DNA polymerase IV (402 aa).

The region spanning 5–187 (ILLADMNSFY…LPVRELFGVG (183 aa)) is the UmuC domain. Residues D9 and D105 each contribute to the Mg(2+) site. E106 is a catalytic residue.

The protein belongs to the DNA polymerase type-Y family. In terms of assembly, monomer. Mg(2+) serves as cofactor.

Its subcellular location is the cytoplasm. It catalyses the reaction DNA(n) + a 2'-deoxyribonucleoside 5'-triphosphate = DNA(n+1) + diphosphate. Functionally, poorly processive, error-prone DNA polymerase involved in untargeted mutagenesis. Copies undamaged DNA at stalled replication forks, which arise in vivo from mismatched or misaligned primer ends. These misaligned primers can be extended by PolIV. Exhibits no 3'-5' exonuclease (proofreading) activity. May be involved in translesional synthesis, in conjunction with the beta clamp from PolIII. The protein is DNA polymerase IV of Pelotomaculum thermopropionicum (strain DSM 13744 / JCM 10971 / SI).